We begin with the raw amino-acid sequence, 371 residues long: O-phospho-L-seryl-tRNA:Cys-tRNA synthase 1 (371 aa).

Pyridoxal 5'-phosphate-binding positions include 78–79 (AR), Asn-183, and 206–208 (SGH). N6-(pyridoxal phosphate)lysine is present on Lys-209.

Belongs to the SepCysS family. As to quaternary structure, homodimer. Probably interacts with SepRS. The cofactor is pyridoxal 5'-phosphate.

The catalysed reaction is O-phospho-L-seryl-tRNA(Cys) + hydrogen sulfide + H(+) = L-cysteinyl-tRNA(Cys) + phosphate. In terms of biological role, converts O-phospho-L-seryl-tRNA(Cys) (Sep-tRNA(Cys)) to L-cysteinyl-tRNA(Cys) (Cys-tRNA(Cys)). The chain is O-phospho-L-seryl-tRNA:Cys-tRNA synthase 1 from Archaeoglobus fulgidus (strain ATCC 49558 / DSM 4304 / JCM 9628 / NBRC 100126 / VC-16).